Consider the following 361-residue polypeptide: Carbon monoxide-induced hydrogenase (361 aa).

Cysteine 64, cysteine 67, cysteine 355, and cysteine 358 together coordinate Ni(2+).

The protein to E.coli formate hydrogenlyase hydrogenase isozyme 3 and to bovine mitochondrial NADH-ubiquinone oxidoreductase. Ni(2+) serves as cofactor.

Its function is as follows. The carbon monoxide dehydrogenase (CODH) oxidizes carbon monoxide coupled, via CooF, to the reduction of a hydrogen cation by a hydrogenase (probably CooH). The sequence is that of Carbon monoxide-induced hydrogenase (cooH) from Rhodospirillum rubrum.